The primary structure comprises 267 residues: Strigolactone esterase RMS3 (267 aa).

Serine 96 serves as the catalytic Nucleophile. Residues aspartate 218 and histidine 247 contribute to the active site.

This sequence belongs to the AB hydrolase superfamily.

It is found in the cytoplasm. Its subcellular location is the nucleus. Involved in strigolactone signaling pathway. Functions downstream of strigolactone synthesis, as a component of hormone signaling and as an enzyme that participates in the conversion of strigolactones to the bioactive form. Binds and hydrolyzes the synthetic strigolactone analog GR24 and its enantiomers in vitro. Forms a stable covalent complex with the D-ring of strigolactone, which is essential for hormone bioactivity. The D-ring is attached to His-247 of the catalytic triad. The hydrolysis of strigolactone into a covalently linked intermediate molecule is required to trigger strigolactone signaling. This mechanism defines RMS3 as a non-canonical hormone receptor with dual functions to generate and sense the active form of strigolactone. Strigolactones are hormones that inhibit tillering and shoot branching through the MAX-dependent pathway, contribute to the regulation of shoot architectural response to phosphate-limiting conditions and function as rhizosphere signal that stimulates hyphal branching of arbuscular mycorrhizal fungi and trigger seed germination of root parasitic weeds. The polypeptide is Strigolactone esterase RMS3 (Pisum sativum (Garden pea)).